A 232-amino-acid polypeptide reads, in one-letter code: Enolase-phosphatase E1 (232 aa).

The protein belongs to the HAD-like hydrolase superfamily. MasA/MtnC family. Monomer. Requires Mg(2+) as cofactor.

It catalyses the reaction 5-methylsulfanyl-2,3-dioxopentyl phosphate + H2O = 1,2-dihydroxy-5-(methylsulfanyl)pent-1-en-3-one + phosphate. It participates in amino-acid biosynthesis; L-methionine biosynthesis via salvage pathway; L-methionine from S-methyl-5-thio-alpha-D-ribose 1-phosphate: step 3/6. It functions in the pathway amino-acid biosynthesis; L-methionine biosynthesis via salvage pathway; L-methionine from S-methyl-5-thio-alpha-D-ribose 1-phosphate: step 4/6. Functionally, bifunctional enzyme that catalyzes the enolization of 2,3-diketo-5-methylthiopentyl-1-phosphate (DK-MTP-1-P) into the intermediate 2-hydroxy-3-keto-5-methylthiopentenyl-1-phosphate (HK-MTPenyl-1-P), which is then dephosphorylated to form the acireductone 1,2-dihydroxy-3-keto-5-methylthiopentene (DHK-MTPene). This chain is Enolase-phosphatase E1, found in Xanthomonas euvesicatoria pv. vesicatoria (strain 85-10) (Xanthomonas campestris pv. vesicatoria).